Reading from the N-terminus, the 142-residue chain is MSFVDGSVIVAILNEEPGFEELEKRLSDADGKLCVSPLVRFEAVAALTRLRIIATKGKADRSDLIGEARELVDSFIQALSASEVTIDSHTGVRALDAMARYGKVAGHPAALNLGDCFAYAAAKESGLTLIYKGNDFSQTDLG.

One can recognise a PINc domain in the interval Phe-3 to Asp-140. Residues Asp-5 and Asp-115 each coordinate Mg(2+).

Belongs to the PINc/VapC protein family. Requires Mg(2+) as cofactor.

Functionally, toxic component of a type II toxin-antitoxin (TA) system. An RNase. The sequence is that of VapC ribonuclease R02377 from Rhizobium meliloti (strain 1021) (Ensifer meliloti).